We begin with the raw amino-acid sequence, 319 residues long: MPDAAAAAAAAQDADAVMRDAPADAAAGGGDNDDDDGDDGTEEDEEEDDDEEGDEEELPPAEDPAAPEPVSALLPGSPNQLTLLFQGEVYVFESVTPEKVQAVLLLLGRSEMPPGLANMVLPNQRENRGYDDLLQRTDIPAKRVASLIRFREKRKERNFDKKIRYAVRKEVALRMQRRKGQFAGRANMEGESLSPGCELASQGSGQDFLSRESKCQNCGTSEKMTPAMRRGPAGPRTLCNACGLMWANKGTLRNCPKAKVESSVVATEQSNAAVSPSGIDNKELVVPNPENITASHGEVMGDSTPANEAEIGAPKAQSQ.

Over residues 1–15 the composition is skewed to low complexity; the sequence is MPDAAAAAAAAQDAD. The disordered stretch occupies residues 1–74; the sequence is MPDAAAAAAA…AAPEPVSALL (74 aa). Positions 31–60 are enriched in acidic residues; the sequence is DNDDDDGDDGTEEDEEEDDDEEGDEEELPP. The region spanning 74–109 is the Tify domain; sequence LPGSPNQLTLLFQGEVYVFESVTPEKVQAVLLLLGR. The 43-residue stretch at 143–185 folds into the CCT domain; that stretch reads RVASLIRFREKRKERNFDKKIRYAVRKEVALRMQRRKGQFAGR. The GATA-type zinc finger occupies 215–242; that stretch reads CQNCGTSEKMTPAMRRGPAGPRTLCNAC. Residues 292–319 form a disordered region; that stretch reads ITASHGEVMGDSTPANEAEIGAPKAQSQ.

It belongs to the type IV zinc-finger family. Class C subfamily.

It is found in the nucleus. Transcriptional activator that specifically binds 5'-GATA-3' or 5'-GAT-3' motifs within gene promoters. This is GATA transcription factor 18 from Oryza sativa subsp. japonica (Rice).